The chain runs to 182 residues: DNA-directed RNA polymerase 30 kDa polypeptide (182 aa).

Residues 135-175 (STIRCVACKSNNTIPMILQTRSSDEEPTVRVVCKDCGKNFA) form a TFIIS-type zinc finger. Zn(2+)-binding residues include Cys-139, Cys-142, Cys-167, and Cys-170.

This sequence belongs to the poxviridae DNA-directed RNA polymerase 30 kDa subunit family. As to quaternary structure, this enzyme consists of at least eight subunits.

The catalysed reaction is RNA(n) + a ribonucleoside 5'-triphosphate = RNA(n+1) + diphosphate. Its function is as follows. DNA-dependent RNA polymerase catalyzes the transcription of DNA into RNA using the four ribonucleoside triphosphates as substrates. Rpo30 may have a role in RNA chain elongation. This chain is DNA-directed RNA polymerase 30 kDa polypeptide (RPO30), found in Fowlpox virus (strain NVSL) (FPV).